Here is a 344-residue protein sequence, read N- to C-terminus: Protein POLAR LOCALIZATION DURING ASYMMETRIC DIVISION AND REDISTRIBUTION (344 aa).

Phosphothreonine; by ASK7 is present on threonine 19. Serine 79 carries the post-translational modification Phosphoserine; by ASK7. Residues threonine 84 and threonine 86 each carry the phosphothreonine; by ASK7 modification. Serine 91 and serine 94 each carry phosphoserine; by ASK7. A phosphothreonine; by ASK7 mark is found at threonine 193, threonine 217, and threonine 233. Residue serine 235 is modified to Phosphoserine; by ASK7. The stretch at 262–297 (LETRQQEELVKLETALNRVERRLQEKETEVSWWKDA) forms a coiled coil. Residues serine 308, serine 309, serine 320, serine 321, and serine 336 each carry the phosphoserine; by ASK7 modification.

Component of a complex made of POLAR, BASL, ASK7/BIN2 and ASK3/SK12. Interacts with BASL, ASK7/BIN2 and ASK3/SK12. Post-translationally, phosphorylation by ASK7/BIN2 is increases turnover. In terms of tissue distribution, expressed in stomatal lineage cells with asymmetric division potential.

The protein localises to the cytoplasm. It is found in the cell cortex. Its function is as follows. Regulates asymmetric cell division (ACD), especially in stomatal-lineage cells. Acts as a stomatal lineage scaffold which regulates subcellular localization and transient polarization of kinases (e.g. ASK7/BIN2 and ASK3/SK12) involved in ACD in a BASL-dependent manner. Promotes the differentiation of both pavement cells and stomata. This is Protein POLAR LOCALIZATION DURING ASYMMETRIC DIVISION AND REDISTRIBUTION from Arabidopsis thaliana (Mouse-ear cress).